Here is a 519-residue protein sequence, read N- to C-terminus: 2,3-bisphosphoglycerate-independent phosphoglycerate mutase (519 aa).

The Mn(2+) site is built by aspartate 18 and serine 68. Catalysis depends on serine 68, which acts as the Phosphoserine intermediate. Residues histidine 129, 159–160 (RD), arginine 191, arginine 197, 267–270 (RADR), and lysine 341 contribute to the substrate site. Residues aspartate 408, histidine 412, aspartate 449, histidine 450, and histidine 468 each coordinate Mn(2+).

This sequence belongs to the BPG-independent phosphoglycerate mutase family. In terms of assembly, monomer. Requires Mn(2+) as cofactor.

It carries out the reaction (2R)-2-phosphoglycerate = (2R)-3-phosphoglycerate. Its pathway is carbohydrate degradation; glycolysis; pyruvate from D-glyceraldehyde 3-phosphate: step 3/5. Functionally, catalyzes the interconversion of 2-phosphoglycerate and 3-phosphoglycerate. The protein is 2,3-bisphosphoglycerate-independent phosphoglycerate mutase of Coxiella burnetii (strain RSA 493 / Nine Mile phase I).